We begin with the raw amino-acid sequence, 117 residues long: Hainantoxin-XV-5 (117 aa).

Positions 1-20 (MKLCAVIIASLLVCVAVASS) are cleaved as a signal peptide. Residues 20 to 55 (SSDNQKEFAQEKEMTREETQSLGEHEKDDEVTGSEE) form a disordered region. The propeptide occupies 21-56 (SDNQKEFAQEKEMTREETQSLGEHEKDDEVTGSEER). Residues 23–55 (NQKEFAQEKEMTREETQSLGEHEKDDEVTGSEE) are compositionally biased toward basic and acidic residues. 4 disulfides stabilise this stretch: Cys-58-Cys-72, Cys-65-Cys-78, Cys-69-Cys-115, and Cys-71-Cys-91.

This sequence belongs to the neurotoxin 03 (Tx2) family. 02 subfamily. HNTX-XV sub-subfamily. In terms of tissue distribution, expressed by the venom gland.

Its subcellular location is the secreted. Its function is as follows. Putative ion channel inhibitor. In Cyriopagopus hainanus (Chinese bird spider), this protein is Hainantoxin-XV-5.